Consider the following 622-residue polypeptide: Putative E3 ubiquitin-protein ligase ORTHRUS 4 (622 aa).

The PHD-type zinc-finger motif lies at 12 to 62 (DGVCMRCQVTPPSEETLTCGTCVTPWHVSCLLPESLASSTGDWECPDCSGV). The RING-type 1 zinc-finger motif lies at 129–169 (CSICIQLPERPVTTPCGHNFCLKCFEKWAVGQGKLTCMICR). A YDG domain is found at 258 to 407 (TRNQGVLVGE…HKMCRYLFVR (150 aa)). The RING-type 2 zinc-finger motif lies at 498 to 555 (CQICRKVLSLPVTTPCAHNFCKACLEAKFAGITQLRDRSNGVRKLRAKKNIMTCPCCT). Residues 566–602 (QVNREMMEIIENFKKSEEEAEVAESSNISEEEEEESE) adopt a coiled-coil conformation. The tract at residues 579-622 (KKSEEEAEVAESSNISEEEEEESEPPTKKIKMDNNSVGDTSLSA) is disordered. Polar residues predominate over residues 611–622 (DNNSVGDTSLSA).

It is found in the nucleus. It carries out the reaction S-ubiquitinyl-[E2 ubiquitin-conjugating enzyme]-L-cysteine + [acceptor protein]-L-lysine = [E2 ubiquitin-conjugating enzyme]-L-cysteine + N(6)-ubiquitinyl-[acceptor protein]-L-lysine.. It functions in the pathway protein modification; protein ubiquitination. Its function is as follows. E3 ubiquitin-protein ligase. May participate in CpG methylation-dependent transcriptional regulation. This Arabidopsis thaliana (Mouse-ear cress) protein is Putative E3 ubiquitin-protein ligase ORTHRUS 4 (ORTH4).